A 72-amino-acid chain; its full sequence is Large ribosomal subunit protein bL28 (72 aa).

It belongs to the bacterial ribosomal protein bL28 family.

This chain is Large ribosomal subunit protein bL28, found in Chlorobaculum parvum (strain DSM 263 / NCIMB 8327) (Chlorobium vibrioforme subsp. thiosulfatophilum).